A 288-amino-acid chain; its full sequence is 4-diphosphocytidyl-2-C-methyl-D-erythritol kinase (288 aa).

The active site involves K11. 93-103 (PFGAGLGGGSS) serves as a coordination point for ATP. D135 is a catalytic residue.

Belongs to the GHMP kinase family. IspE subfamily.

The enzyme catalyses 4-CDP-2-C-methyl-D-erythritol + ATP = 4-CDP-2-C-methyl-D-erythritol 2-phosphate + ADP + H(+). The protein operates within isoprenoid biosynthesis; isopentenyl diphosphate biosynthesis via DXP pathway; isopentenyl diphosphate from 1-deoxy-D-xylulose 5-phosphate: step 3/6. Its function is as follows. Catalyzes the phosphorylation of the position 2 hydroxy group of 4-diphosphocytidyl-2C-methyl-D-erythritol. This is 4-diphosphocytidyl-2-C-methyl-D-erythritol kinase from Chlorobium limicola (strain DSM 245 / NBRC 103803 / 6330).